Reading from the N-terminus, the 139-residue chain is Small ribosomal subunit protein uS9 (139 aa).

This sequence belongs to the universal ribosomal protein uS9 family.

This chain is Small ribosomal subunit protein uS9, found in Coxiella burnetii (strain CbuG_Q212) (Coxiella burnetii (strain Q212)).